Reading from the N-terminus, the 227-residue chain is NAD(P)H-quinone oxidoreductase subunit K, chloroplastic (227 aa).

Residues cysteine 43, cysteine 44, cysteine 108, and cysteine 139 each contribute to the [4Fe-4S] cluster site.

The protein belongs to the complex I 20 kDa subunit family. As to quaternary structure, NDH is composed of at least 16 different subunits, 5 of which are encoded in the nucleus. Requires [4Fe-4S] cluster as cofactor.

It localises to the plastid. The protein resides in the chloroplast thylakoid membrane. The catalysed reaction is a plastoquinone + NADH + (n+1) H(+)(in) = a plastoquinol + NAD(+) + n H(+)(out). It catalyses the reaction a plastoquinone + NADPH + (n+1) H(+)(in) = a plastoquinol + NADP(+) + n H(+)(out). Functionally, NDH shuttles electrons from NAD(P)H:plastoquinone, via FMN and iron-sulfur (Fe-S) centers, to quinones in the photosynthetic chain and possibly in a chloroplast respiratory chain. The immediate electron acceptor for the enzyme in this species is believed to be plastoquinone. Couples the redox reaction to proton translocation, and thus conserves the redox energy in a proton gradient. This Ranunculus macranthus (Large buttercup) protein is NAD(P)H-quinone oxidoreductase subunit K, chloroplastic.